The following is a 412-amino-acid chain: CCA-adding enzyme (412 aa).

2 residues coordinate ATP: Ser-41 and Lys-44. The CTP site is built by Ser-41 and Lys-44. Residues Asp-53, Asp-55, and Asp-106 each coordinate Mg(2+). Residues His-129, Lys-149, and Tyr-158 each contribute to the ATP site. Residues His-129, Lys-149, and Tyr-158 each contribute to the CTP site.

This sequence belongs to the tRNA nucleotidyltransferase/poly(A) polymerase family. Archaeal CCA-adding enzyme subfamily. In terms of assembly, homodimer. Forms a tetramer upon binding two tRNAs. However, tRNA-induced tetramer formation is not required for CCA addition. The cofactor is Mg(2+).

It carries out the reaction a tRNA precursor + 2 CTP + ATP = a tRNA with a 3' CCA end + 3 diphosphate. It catalyses the reaction a tRNA with a 3' CCA end + 2 CTP + ATP = a tRNA with a 3' CCACCA end + 3 diphosphate. In terms of biological role, catalyzes the addition and repair of the essential 3'-terminal CCA sequence in tRNAs without using a nucleic acid template. Adds these three nucleotides in the order of C, C, and A to the tRNA nucleotide-73, using CTP and ATP as substrates and producing inorganic pyrophosphate. tRNA 3'-terminal CCA addition is required both for tRNA processing and repair. Also involved in tRNA surveillance by mediating tandem CCA addition to generate a CCACCA at the 3' terminus of unstable tRNAs. While stable tRNAs receive only 3'-terminal CCA, unstable tRNAs are marked with CCACCA and rapidly degraded. The structural flexibility of RNA controls the choice between CCA versus CCACCA addition: following the first CCA addition cycle, nucleotide-binding to the active site triggers a clockwise screw motion, producing torque on the RNA. This ejects stable RNAs, whereas unstable RNAs are refolded while bound to the enzyme and subjected to a second CCA catalytic cycle. The polypeptide is CCA-adding enzyme (Saccharolobus shibatae (strain ATCC 51178 / DSM 5389 / JCM 8931 / NBRC 15437 / B12) (Sulfolobus shibatae)).